The sequence spans 186 residues: Protein GrpE (186 aa).

Positions 1–15 (MADEQQTLDQQTPEQ) are enriched in polar residues. The interval 1–20 (MADEQQTLDQQTPEQPTGAA) is disordered.

Belongs to the GrpE family. Homodimer.

The protein localises to the cytoplasm. Functionally, participates actively in the response to hyperosmotic and heat shock by preventing the aggregation of stress-denatured proteins, in association with DnaK and GrpE. It is the nucleotide exchange factor for DnaK and may function as a thermosensor. Unfolded proteins bind initially to DnaJ; upon interaction with the DnaJ-bound protein, DnaK hydrolyzes its bound ATP, resulting in the formation of a stable complex. GrpE releases ADP from DnaK; ATP binding to DnaK triggers the release of the substrate protein, thus completing the reaction cycle. Several rounds of ATP-dependent interactions between DnaJ, DnaK and GrpE are required for fully efficient folding. This is Protein GrpE from Pseudomonas aeruginosa (strain UCBPP-PA14).